The sequence spans 179 residues: UPF0227 protein Swoo_1808 (179 aa).

The protein belongs to the UPF0227 family.

In Shewanella woodyi (strain ATCC 51908 / MS32), this protein is UPF0227 protein Swoo_1808.